The chain runs to 138 residues: Small ribosomal subunit protein uS11c (138 aa).

Residues 1 to 23 (MAKPILRIGSRKNTRSGSRKNVR) form a disordered region. Residues 9–23 (GSRKNTRSGSRKNVR) show a composition bias toward basic residues.

Belongs to the universal ribosomal protein uS11 family. As to quaternary structure, part of the 30S ribosomal subunit.

The protein localises to the plastid. It localises to the chloroplast. This is Small ribosomal subunit protein uS11c from Barbarea verna (Land cress).